Consider the following 253-residue polypeptide: 5-oxoprolinase subunit A (253 aa).

It belongs to the LamB/PxpA family. Forms a complex composed of PxpA, PxpB and PxpC.

It catalyses the reaction 5-oxo-L-proline + ATP + 2 H2O = L-glutamate + ADP + phosphate + H(+). In terms of biological role, catalyzes the cleavage of 5-oxoproline to form L-glutamate coupled to the hydrolysis of ATP to ADP and inorganic phosphate. This is 5-oxoprolinase subunit A from Bacillus cereus (strain Q1).